We begin with the raw amino-acid sequence, 213 residues long: Ras-related protein Rab-25 (213 aa).

Residues Ser21, Gly24, Lys25, Thr26, Asn27, Ser38, His39, Thr43, and Thr44 each contribute to the GTP site. Residue Thr26 coordinates Mg(2+). 2 short sequence motifs (switch) span residues 35 to 49 (NEFS…GVEF) and 67 to 84 (DTAG…YYRG). Positions 44 and 67 each coordinate Mg(2+). GTP is bound by residues Gly70, Asn125, Lys126, Asp128, Ala156, and Leu157. S-geranylgeranyl cysteine attachment occurs at residues Cys209 and Cys210. Cys210 is subject to Cysteine methyl ester. The propeptide at 211–213 (ISL) is removed in mature form.

It belongs to the small GTPase superfamily. Rab family. Interacts (GTP-bound form) with RAB11FIP1, RAB11FIP2, RAB11FIP3 and RAB11FIP4. Interacts (via the hypervariable C-terminal region) with ITGB1 (via the cytoplasmic region); the interaction is GTP-dependent. Interacts with ITGAV. Associates with the integrin alpha-V/beta-1 heterodimer. Interacts with VPS33B. Requires Mg(2+) as cofactor.

It localises to the cell membrane. The protein localises to the cell projection. It is found in the pseudopodium membrane. The protein resides in the cytoplasmic vesicle. The catalysed reaction is GTP + H2O = GDP + phosphate + H(+). Regulated by guanine nucleotide exchange factors (GEFs) which promote the exchange of bound GDP for free GTP. Regulated by GTPase activating proteins (GAPs) which increase the GTP hydrolysis activity. Inhibited by GDP dissociation inhibitors (GDIs) which prevent Rab-GDP dissociation. Its function is as follows. The small GTPases Rab are key regulators of intracellular membrane trafficking, from the formation of transport vesicles to their fusion with membranes. Rabs cycle between an inactive GDP-bound form and an active GTP-bound form that is able to recruit to membranes different set of downstream effectors directly responsible for vesicle formation, movement, tethering and fusion. RAB25 regulates epithelial cell differentiation, proliferation and survival, thereby playing key roles in tumorigenesis. Promotes invasive migration of cells in which it functions to localize and maintain integrin alpha-V/beta-1 at the tips of extending pseudopodia. Involved in the regulation of epithelial morphogenesis through the control of CLDN4 expression and localization at tight junctions. May selectively regulate the apical recycling pathway. Together with MYO5B regulates transcytosis. This Bos taurus (Bovine) protein is Ras-related protein Rab-25 (RAB25).